The following is a 326-amino-acid chain: tRNA N6-adenosine threonylcarbamoyltransferase (326 aa).

Residues His113 and His117 each contribute to the Fe cation site. Substrate-binding positions include 134 to 138 (VASGG), Asp167, Gly180, and Asn267. Asp291 contributes to the Fe cation binding site.

This sequence belongs to the KAE1 / TsaD family. Requires Fe(2+) as cofactor.

The protein resides in the cytoplasm. It catalyses the reaction L-threonylcarbamoyladenylate + adenosine(37) in tRNA = N(6)-L-threonylcarbamoyladenosine(37) in tRNA + AMP + H(+). In terms of biological role, required for the formation of a threonylcarbamoyl group on adenosine at position 37 (t(6)A37) in tRNAs that read codons beginning with adenine. Is involved in the transfer of the threonylcarbamoyl moiety of threonylcarbamoyl-AMP (TC-AMP) to the N6 group of A37, together with TsaE and TsaB. TsaD likely plays a direct catalytic role in this reaction. The sequence is that of tRNA N6-adenosine threonylcarbamoyltransferase from Thermus thermophilus (strain ATCC 27634 / DSM 579 / HB8).